Reading from the N-terminus, the 217-residue chain is Tectonin-1 (217 aa).

6 tandem repeats follow at residues 2–37 (VHWE…HWDG), 38–74 (HKWH…DRSN), 75–111 (NKWT…DHHH), 112–146 (NKWD…RWDG), 147–182 (SKVD…LKHG), and 183–217 (KDWE…KATL). Positions 2–217 (VHWEKHEGEL…KLHHIYKATL (216 aa)) are 6 X approximate tandem repeats.

Belongs to the tectonin family.

It is found in the cell surface. It localises to the cytoplasmic vesicle membrane. Probably involved in bacterial recognition. May be a lectin that function as part of a transmembrane signaling complex during phagocytosis. The chain is Tectonin-1 (TECA) from Physarum polycephalum (Slime mold).